We begin with the raw amino-acid sequence, 269 residues long: NAD-capped RNA hydrolase NudC (269 aa).

Arg81 contributes to the substrate binding site. 4 residues coordinate Zn(2+): Cys110, Cys113, Cys128, and Cys131. Tyr136 lines the substrate pocket. In terms of domain architecture, Nudix hydrolase spans 137-260; the sequence is PRIFPCIIVA…TIARALIEQT (124 aa). Positions 170, 186, and 190 each coordinate a divalent metal cation. The Nudix box motif lies at 171-192; it reads GFVEVGETLEQCVAREVLEETG. 204 to 211 is a substrate binding site; sequence QPWAFPSS. Position 231 (Glu231) interacts with a divalent metal cation. A substrate-binding site is contributed by Ala253.

This sequence belongs to the Nudix hydrolase family. NudC subfamily. In terms of assembly, homodimer. Mg(2+) is required as a cofactor. The cofactor is Mn(2+). Zn(2+) serves as cofactor.

It catalyses the reaction a 5'-end NAD(+)-phospho-ribonucleoside in mRNA + H2O = a 5'-end phospho-adenosine-phospho-ribonucleoside in mRNA + beta-nicotinamide D-ribonucleotide + 2 H(+). The catalysed reaction is NAD(+) + H2O = beta-nicotinamide D-ribonucleotide + AMP + 2 H(+). It carries out the reaction NADH + H2O = reduced beta-nicotinamide D-ribonucleotide + AMP + 2 H(+). MRNA decapping enzyme that specifically removes the nicotinamide adenine dinucleotide (NAD) cap from a subset of mRNAs by hydrolyzing the diphosphate linkage to produce nicotinamide mononucleotide (NMN) and 5' monophosphate mRNA. The NAD-cap is present at the 5'-end of some mRNAs and stabilizes RNA against 5'-processing. Has preference for mRNAs with a 5'-end purine. Catalyzes the hydrolysis of a broad range of dinucleotide pyrophosphates. The chain is NAD-capped RNA hydrolase NudC from Vibrio cholerae serotype O1 (strain ATCC 39315 / El Tor Inaba N16961).